The sequence spans 325 residues: uncharacterized protein (325 aa).

The segment at 1–32 (MKQEYIPLDEFPNKSNEGMLNDEGTSSSGLST) is disordered. Positions 23–32 (EGTSSSGLST) are enriched in low complexity. A coiled-coil region spans residues 135–223 (AEEISNLKTS…LKKREDLLRL (89 aa)).

The protein localises to the cytoplasm. It localises to the cytoskeleton. Its subcellular location is the microtubule organizing center. The protein resides in the spindle pole body. This is an uncharacterized protein from Schizosaccharomyces pombe (strain 972 / ATCC 24843) (Fission yeast).